A 275-amino-acid chain; its full sequence is 2,3,4,5-tetrahydropyridine-2,6-dicarboxylate N-succinyltransferase (275 aa).

Substrate is bound by residues Arg-106 and Asp-143.

This sequence belongs to the transferase hexapeptide repeat family. As to quaternary structure, homotrimer.

It localises to the cytoplasm. The catalysed reaction is (S)-2,3,4,5-tetrahydrodipicolinate + succinyl-CoA + H2O = (S)-2-succinylamino-6-oxoheptanedioate + CoA. It functions in the pathway amino-acid biosynthesis; L-lysine biosynthesis via DAP pathway; LL-2,6-diaminopimelate from (S)-tetrahydrodipicolinate (succinylase route): step 1/3. This Burkholderia mallei (strain NCTC 10247) protein is 2,3,4,5-tetrahydropyridine-2,6-dicarboxylate N-succinyltransferase.